A 1501-amino-acid chain; its full sequence is RE1-silencing transcription factor A (1501 aa).

The segment at 158-180 (FRCKPCQYKAESEEEFVHHIKIH) adopts a C2H2-type 1 zinc-finger fold. Over residues 186–200 (VDNDSKKNPQGKEAD) the composition is skewed to basic and acidic residues. Positions 186–209 (VDNDSKKNPQGKEADSSIPEESDI) are disordered. 7 consecutive C2H2-type zinc fingers follow at residues 214 to 236 (IQCDGCGYNTNRFDHYLAHLKHH), 246 to 268 (YKCTICTYSTVSEYHWKKHLRNH), 274 to 296 (YTCSQCSYFSDRKNNYIQHIRTH), 302 to 324 (YQCIICLYSSSQKTHLTRHMRTH), 330 to 353 (FKCEQCSYVASNQHEVTRHARQVH), 359 to 381 (LTCPHCDYKTADRSNFKKHVELH), and 387 to 410 (FLCPVCDYAASKKCNLQYHIKSRH). 4 disordered regions span residues 491-514 (SSTQKKIKASEVRPEKIVDKSRKS), 569-612 (SFVK…SVAS), 885-929 (PTKV…VPGD), and 1040-1079 (VAAGDEPTSVQPLSREDPKSVQPIGEDQPTSVQPPGGDEQ). Basic and acidic residues-rich tracts occupy residues 498–512 (KASEVRPEKIVDKSR) and 594–605 (ITEKKEKGKQLD). Residues 1067–1079 (QPTSVQPPGGDEQ) show a composition bias toward polar residues. The C2H2-type 9 zinc finger occupies 1463 to 1485 (FVCIFCDRTFRKEEEYTKHLRRH).

Its subcellular location is the nucleus. The protein localises to the cytoplasm. Transcriptional repressor which binds neuron-restrictive silencer element (NRSE) and represses neuronal gene transcription in non-neuronal cells. Plays a role in the early development of the nervous system and is required for proper patterning of the neuroectoderm during gastrulation. This involves the correct speciation of the neuroepithelial domain and adequate development of the non-neural ectoderm. The protein is RE1-silencing transcription factor A (rest-a) of Xenopus laevis (African clawed frog).